Here is a 246-residue protein sequence, read N- to C-terminus: Tyrosine recombinase XerD-like (246 aa).

The Core-binding (CB) domain occupies 1–72 (MINDINNFIE…AVNQFLFFLY (72 aa)). Residues 84–246 (QETEKITLAQ…TPITLERYYR (163 aa)) enclose the Tyr recombinase domain. Catalysis depends on residues K149 and R212. Y244 serves as the catalytic O-(3'-phospho-DNA)-tyrosine intermediate.

Belongs to the 'phage' integrase family. XerD-like subfamily.

It localises to the cytoplasm. Its function is as follows. Putative tyrosine recombinase. Not involved in the cutting and rejoining of the recombining DNA molecules on dif(SL) site. In Streptococcus agalactiae serotype V (strain ATCC BAA-611 / 2603 V/R), this protein is Tyrosine recombinase XerD-like.